Reading from the N-terminus, the 94-residue chain is Alpha-galactosyl-binding lectin (94 aa).

In terms of assembly, homodimer. Contains three disulfide bonds.

Alpha-galactosyl-binding lectin with preference for galactose-alpha-1,4-galactose. This is Alpha-galactosyl-binding lectin from Lyophyllum decastes (Fried chicken mushroom).